The chain runs to 455 residues: Ammonium transporter Rh type B (455 aa).

The Cytoplasmic segment spans residues 1 to 13 (MAWSPRHSAGRRL). The helical transmembrane segment at 14-34 (QLPLLCLLLQGATAILFAVFV) threads the bilayer. Residues 35–61 (RYNRETDAALWHWGNHSNADNEFYFRY) lie on the Extracellular side of the membrane. Asparagine 49 carries N-linked (GlcNAc...) asparagine glycosylation. The chain crosses the membrane as a helical span at residues 62–82 (PSFQDVHAMIFVGFGFLMVFL). The Cytoplasmic segment spans residues 83-86 (QRYG). Residues 87-107 (FGSVGFTFLLAAFALQWSTLI) traverse the membrane as a helical segment. At 108 to 124 (QGFFHSFRGGYILVGME) the chain is on the extracellular side. A helical transmembrane segment spans residues 125-145 (SMINADFCAGAVLISFGAVLG). Residues 146–151 (KTGPVQ) are Cytoplasmic-facing. Residues 152–172 (LLLMALLEVVLFGLNEFVLLS) form a helical membrane-spanning segment. At 173–179 (LLEVKDA) the chain is on the extracellular side. The chain crosses the membrane as a helical span at residues 180–200 (GGSMTIHTFGAYFGLILSRVL). Over 201 to 219 (YRPQLEKSKHRQGSVYHSD) the chain is Cytoplasmic. A helical transmembrane segment spans residues 220–240 (LFAMIGTIFLWIFWPSFNSAP). Topologically, residues 241–253 (TALGDGQHRTALN) are extracellular. Residues 254 to 274 (TYYSLTASTLSTFALSALVGG) traverse the membrane as a helical segment. The Cytoplasmic portion of the chain corresponds to 275-277 (DGR). A helical transmembrane segment spans residues 278–298 (LDMVHVQNAALAGGVVVGTSA). A topological domain (extracellular) is located at residue glutamate 299. The helical transmembrane segment at 300-320 (MMLTPFGALAAGFLAGAISTL) threads the bilayer. At 321 to 343 (GYKFVTPILESKLKVQDTCGVHN) the chain is on the cytoplasmic side. Residues 344–364 (LHGMPGVLGALLGGLVAGLAT) traverse the membrane as a helical segment. Residues 365-393 (REAYGDGLESVFPLIAEGQRSATSQAMHQ) lie on the Extracellular side of the membrane. Residues 394-414 (LFGLFVTLTFASVGGGLGGLL) traverse the membrane as a helical segment. Topologically, residues 415-455 (LRLPILDSPPDSQCYEDQIYWEVPGEHEHLAQGSEETETQA) are cytoplasmic. Residues 416 to 424 (RLPILDSPP) are interaction with ANK3. The Basolateral sorting signal signature appears at 429–432 (YEDQ).

Belongs to the ammonium transporter (TC 2.A.49) family. Rh subfamily. Interacts (via C-terminus) with ANK2 and ANK3; required for targeting to the basolateral membrane. Post-translationally, N-glycosylated.

The protein localises to the cell membrane. The protein resides in the basolateral cell membrane. The catalysed reaction is NH4(+)(in) = NH4(+)(out). It carries out the reaction methylamine(out) = methylamine(in). The enzyme catalyses CO2(out) = CO2(in). Functionally, ammonium transporter involved in the maintenance of acid-base homeostasis. Transports ammonium and its related derivative methylammonium across the basolateral plasma membrane of epithelial cells likely contributing to renal transepithelial ammonia transport and ammonia metabolism. May transport either NH4(+) or NH3 ammonia species predominantly mediating an electrogenic NH4(+) transport. May act as a CO2 channel providing for renal acid secretion. The protein is Ammonium transporter Rh type B (RHBG) of Bos taurus (Bovine).